The chain runs to 424 residues: ATP-sensitive inward rectifier potassium channel 8 (424 aa).

The Cytoplasmic portion of the chain corresponds to 1 to 69; it reads MLARKSIIPE…IFTTLVDLKW (69 aa). A Phosphoserine modification is found at S6. Residues 70-94 traverse the membrane as a helical segment; sequence RHTLVIFTMSFLCSWLLFAIMWWLV. Over 95-126 the chain is Extracellular; it reads AFAHGDIYAYMEKGITEKSGLESAVCVTNVRS. Residues 127 to 138 constitute an intramembrane region (helical; Pore-forming); that stretch reads FTSAFLFSIEVQ. Positions 139 to 145 form an intramembrane region, pore-forming; that stretch reads VTIGFGG. The Selectivity filter motif lies at 140 to 145; sequence TIGFGG. Over 146-154 the chain is Extracellular; that stretch reads RMMTEECPL. The chain crosses the membrane as a helical span at residues 155 to 176; it reads AITVLILQNIVGLIINAVMLGC. Topologically, residues 177–424 are cytoplasmic; sequence IFMKTAQAHR…PEGNQCPSES (248 aa). The interval 374-424 is disordered; sequence LSHQNSLRKRNSMRRNNSMRRSNSIRRNNSSLMVPKVQFMTPEGNQCPSES. The span at 387–404 shows a compositional bias: low complexity; it reads RRNNSMRRSNSIRRNNSS.

Belongs to the inward rectifier-type potassium channel (TC 1.A.2.1) family. KCNJ8 subfamily. As to quaternary structure, interacts with ABCC9. Widely expressed, including in pancreatic islets, pituitary, skeletal muscle and heart.

It is found in the membrane. It carries out the reaction K(+)(in) = K(+)(out). Inward rectifier potassium channels are characterized by a greater tendency to allow potassium to flow into the cell rather than out of it. Their voltage dependence is regulated by the concentration of extracellular potassium; as external potassium is raised, the voltage range of the channel opening shifts to more positive voltages. The inward rectification is mainly due to the blockage of outward current by internal magnesium. This channel is activated by internal ATP and can be blocked by external barium. Can form a sulfonyllurea-sensitive but ATP-insensitive potassium channel with ABCC9. This chain is ATP-sensitive inward rectifier potassium channel 8 (Kcnj8), found in Rattus norvegicus (Rat).